Reading from the N-terminus, the 250-residue chain is Small ribosomal subunit protein uS2 (250 aa).

Belongs to the universal ribosomal protein uS2 family.

The sequence is that of Small ribosomal subunit protein uS2 from Paraburkholderia xenovorans (strain LB400).